The sequence spans 477 residues: Argininosuccinate lyase (477 aa).

This sequence belongs to the lyase 1 family. Argininosuccinate lyase subfamily.

The protein localises to the cytoplasm. The catalysed reaction is 2-(N(omega)-L-arginino)succinate = fumarate + L-arginine. It participates in amino-acid biosynthesis; L-arginine biosynthesis; L-arginine from L-ornithine and carbamoyl phosphate: step 3/3. The protein is Argininosuccinate lyase of Corynebacterium glutamicum (strain R).